The primary structure comprises 333 residues: Lipoyl synthase (333 aa).

Residues Cys55, Cys60, Cys66, Cys81, Cys85, Cys88, and Ser292 each contribute to the [4Fe-4S] cluster site. The Radical SAM core domain maps to 67 to 281 (WEDREATFLI…SAEAERLGFA (215 aa)).

It belongs to the radical SAM superfamily. Lipoyl synthase family. The cofactor is [4Fe-4S] cluster.

The protein resides in the cytoplasm. It carries out the reaction [[Fe-S] cluster scaffold protein carrying a second [4Fe-4S](2+) cluster] + N(6)-octanoyl-L-lysyl-[protein] + 2 oxidized [2Fe-2S]-[ferredoxin] + 2 S-adenosyl-L-methionine + 4 H(+) = [[Fe-S] cluster scaffold protein] + N(6)-[(R)-dihydrolipoyl]-L-lysyl-[protein] + 4 Fe(3+) + 2 hydrogen sulfide + 2 5'-deoxyadenosine + 2 L-methionine + 2 reduced [2Fe-2S]-[ferredoxin]. Its pathway is protein modification; protein lipoylation via endogenous pathway; protein N(6)-(lipoyl)lysine from octanoyl-[acyl-carrier-protein]: step 2/2. In terms of biological role, catalyzes the radical-mediated insertion of two sulfur atoms into the C-6 and C-8 positions of the octanoyl moiety bound to the lipoyl domains of lipoate-dependent enzymes, thereby converting the octanoylated domains into lipoylated derivatives. This chain is Lipoyl synthase, found in Kineococcus radiotolerans (strain ATCC BAA-149 / DSM 14245 / SRS30216).